The chain runs to 425 residues: Formyl-CoA:oxalate CoA-transferase (425 aa).

Residues 17–18, R38, 72–75, 96–98, R104, and 136–139 contribute to the CoA site; these read QS, LDTK, NFG, and KVYE. Catalysis depends on D168, which acts as the Nucleophile. Residue 247-249 participates in substrate binding; the sequence is GGQ.

It belongs to the CoA-transferase III family. Frc subfamily. Homodimer.

It carries out the reaction formyl-CoA + oxalate = oxalyl-CoA + formate. It functions in the pathway metabolic intermediate degradation; oxalate degradation; CO(2) and formate from oxalate: step 1/2. Functionally, involved in the catabolism of oxalate and in the adapatation to low pH via the induction of the oxalate-dependent acid tolerance response (ATR). Catalyzes the transfer of the CoA moiety from formyl-CoA to oxalate. The chain is Formyl-CoA:oxalate CoA-transferase from Bradyrhizobium sp. (strain ORS 278).